The chain runs to 1006 residues: Multiple C2 domain and transmembrane region protein 9 (1006 aa).

The C2 1 domain occupies 1-108; the sequence is MSNIKLGVEV…PRSEAAPFNY (108 aa). Residues 135-156 form a disordered region; that stretch reads VTPSVPTPVPESPQAYSPSPRK. 3 consecutive C2 domains span residues 251–371, 411–536, and 579–704; these read RGTE…PQWY, SDSS…DRWV, and NSSD…THAY. Residues Asp-284, Asp-290, Asp-337, Asp-339, and Asp-344 each coordinate Ca(2+). The next 2 membrane-spanning stretches (helical) occupy residues 842 to 862 and 946 to 966; these read MLVTFPEMILPTVFLYMAVIG and ATAIFVTFCFIIAMALYITPF.

It belongs to the MCTP family. The cofactor is Ca(2+). In terms of tissue distribution, expressed in incipient leaf primordia and roots meristems. Observed in flowers.

Its subcellular location is the cell membrane. It localises to the cytoplasm. In terms of biological role, may function as a signaling molecule by regulating the trafficking of other regulators. This is Multiple C2 domain and transmembrane region protein 9 from Arabidopsis thaliana (Mouse-ear cress).